Here is a 464-residue protein sequence, read N- to C-terminus: MYENFCIYHIGLDDFDLLSYGCTTHVATYLLHSLAKRFSSIVFIDYPNLVRLNPSIPWKTRGNGAIAIRIAMECTDLNNLLEAAEDIIDEYYEKYGVRTKDVVSSDREPGLVVVRNGIVNDMGSLYITALTDVLLPEIVKKKIDKYGRENIVVSKRYCGRGIVGAAASVGWIAIDSDYTYELLVYRSEKFYSLDRCVNEESVKYFDSITKDRTFNNIDVDSNRILITSHGRDPILYGVRGEDPEVLLKALDIIRVCEPISSWTIFRTNQATDAHAIDRSVSSLRVYRTGKIRVTISSKPSIGMGGTVIINGFDATGSITLAFFRPSYLNRYASMLIPGDVIEANGHVKPWNIGPVFHVEKFSVLKLAPLYRCKAPRCPYCRKRLTKMGRGKGYKCDKCGYSVINPDLECEYIERKIRLGLYIPPPRALKHLIKPIERYGKEKYRHRYPIELKLSQITKILETSI.

This sequence belongs to the TiaS family.

The protein localises to the cytoplasm. The catalysed reaction is cytidine(34) in tRNA(Ile2) + agmatine + ATP + H2O = 2-agmatinylcytidine(34) in tRNA(Ile2) + AMP + 2 phosphate + 2 H(+). Its function is as follows. ATP-dependent agmatine transferase that catalyzes the formation of 2-agmatinylcytidine (agm2C) at the wobble position (C34) of tRNA(Ile2), converting the codon specificity from AUG to AUA. The protein is tRNA(Ile2) 2-agmatinylcytidine synthetase TiaS of Ignisphaera aggregans (strain DSM 17230 / JCM 13409 / AQ1.S1).